The sequence spans 248 residues: Ribosomal RNA small subunit methyltransferase G (248 aa).

S-adenosyl-L-methionine contacts are provided by residues Gly85, Phe90, 108–110 (DSS), 137–138 (AE), and Arg156.

The protein belongs to the methyltransferase superfamily. RNA methyltransferase RsmG family.

The protein localises to the cytoplasm. Specifically methylates the N7 position of a guanine in 16S rRNA. The chain is Ribosomal RNA small subunit methyltransferase G from Prochlorococcus marinus (strain NATL1A).